Here is a 389-residue protein sequence, read N- to C-terminus: Large ribosomal subunit protein uL3 (389 aa).

The segment at 1–36 (MSHRKFEHPRHGSLGFLPRKRSSRHRGKVKSFPKDD) is disordered. Residues 18–31 (PRKRSSRHRGKVKS) are compositionally biased toward basic residues.

The protein belongs to the universal ribosomal protein uL3 family.

Its subcellular location is the cytoplasm. Its function is as follows. The L3 protein is a component of the large subunit of cytoplasmic ribosomes. This chain is Large ribosomal subunit protein uL3 (RPL3), found in Oryza sativa subsp. japonica (Rice).